Consider the following 191-residue polypeptide: Holliday junction branch migration complex subunit RuvA (191 aa).

The domain I stretch occupies residues 1 to 64 (MIGRLTGTLA…EDAQLLYGFL (64 aa)). Residues 65-138 (TATERATFRQ…KGKLGPDLAL (74 aa)) are domain II. The tract at residues 138–142 (LPGAV) is flexible linker. The interval 143 to 191 (IRNEAQSDIVQALIALGYNEREAAAAIKPLPADVGVSDGIKLALRALGK) is domain III.

This sequence belongs to the RuvA family. Homotetramer. Forms an RuvA(8)-RuvB(12)-Holliday junction (HJ) complex. HJ DNA is sandwiched between 2 RuvA tetramers; dsDNA enters through RuvA and exits via RuvB. An RuvB hexamer assembles on each DNA strand where it exits the tetramer. Each RuvB hexamer is contacted by two RuvA subunits (via domain III) on 2 adjacent RuvB subunits; this complex drives branch migration. In the full resolvosome a probable DNA-RuvA(4)-RuvB(12)-RuvC(2) complex forms which resolves the HJ.

The protein localises to the cytoplasm. Its function is as follows. The RuvA-RuvB-RuvC complex processes Holliday junction (HJ) DNA during genetic recombination and DNA repair, while the RuvA-RuvB complex plays an important role in the rescue of blocked DNA replication forks via replication fork reversal (RFR). RuvA specifically binds to HJ cruciform DNA, conferring on it an open structure. The RuvB hexamer acts as an ATP-dependent pump, pulling dsDNA into and through the RuvAB complex. HJ branch migration allows RuvC to scan DNA until it finds its consensus sequence, where it cleaves and resolves the cruciform DNA. The sequence is that of Holliday junction branch migration complex subunit RuvA from Leptothrix cholodnii (strain ATCC 51168 / LMG 8142 / SP-6) (Leptothrix discophora (strain SP-6)).